The following is a 184-amino-acid chain: ATP synthase subunit b, chloroplastic (184 aa).

A helical transmembrane segment spans residues L27–L49.

This sequence belongs to the ATPase B chain family. As to quaternary structure, F-type ATPases have 2 components, F(1) - the catalytic core - and F(0) - the membrane proton channel. F(1) has five subunits: alpha(3), beta(3), gamma(1), delta(1), epsilon(1). F(0) has four main subunits: a(1), b(1), b'(1) and c(10-14). The alpha and beta chains form an alternating ring which encloses part of the gamma chain. F(1) is attached to F(0) by a central stalk formed by the gamma and epsilon chains, while a peripheral stalk is formed by the delta, b and b' chains.

It is found in the plastid. Its subcellular location is the chloroplast thylakoid membrane. In terms of biological role, f(1)F(0) ATP synthase produces ATP from ADP in the presence of a proton or sodium gradient. F-type ATPases consist of two structural domains, F(1) containing the extramembraneous catalytic core and F(0) containing the membrane proton channel, linked together by a central stalk and a peripheral stalk. During catalysis, ATP synthesis in the catalytic domain of F(1) is coupled via a rotary mechanism of the central stalk subunits to proton translocation. Component of the F(0) channel, it forms part of the peripheral stalk, linking F(1) to F(0). The sequence is that of ATP synthase subunit b, chloroplastic from Atropa belladonna (Belladonna).